Reading from the N-terminus, the 181-residue chain is Oligoribonuclease (181 aa).

The 164-residue stretch at 8-171 (LIWIDMEMTG…ADIYDSIEEL (164 aa)) folds into the Exonuclease domain. Tyr-129 is an active-site residue.

The protein belongs to the oligoribonuclease family.

The protein resides in the cytoplasm. 3'-to-5' exoribonuclease specific for small oligoribonucleotides. The polypeptide is Oligoribonuclease (Nitrosomonas eutropha (strain DSM 101675 / C91 / Nm57)).